The following is a 531-amino-acid chain: MAATLDLKSKEEKDAELDKRIEALRRKNEALIRRYQEIEEDRKKAELEGVAVTAPRKGRSVEKENVAVESEKNLGPSRRSPGTPRPPGASKGGRTPPQQGGRAGMGRASRSWEGSPGEQPRGGGAGGRGRRGRGRGSPHLSGAGDTSISDRKSKEWEERRRQNIEKMNEEMEKIAEYERNQREGVLEPNPVRNFLDDPRRRSGPLEESERDRREESRRHGRNWGGPDFERVRCGLEHERQGRRAGLGSAGDMTLSMTGRERSEYLRWKQEREKIDQERLQRHRKPTGQWRREWDAEKTDGMFKDGPVPAHEPSHRYDDQAWARPPKPPTFGEFLSQHKAEASSRRRRKSSRPQAKAAPRAYSDHDDRWETKEGAASPAPETPQPTSPETSPKETPMQPPEIPAPAHRPPEDEGEENEGEEDEEWEDISEDEEEEEIEVEEGDEEEPAQDHQAPEAAPTGIPCSEQAHGVPFSPEEPLLEPQAPGTPSSPFSPPSGHQPVSDWGEEVELNSPRTTHLAGALSPGEAWPFESV.

A disordered region spans residues E40–V531. Basic and acidic residues predominate over residues R59–K72. A Phosphoserine modification is found at S80. T95 carries the post-translational modification Phosphothreonine. The residue at position 107 (R107) is an Omega-N-methylarginine. S111 bears the Phosphoserine mark. Omega-N-methylarginine occurs at positions 121, 128, and 130. Asymmetric dimethylarginine is present on residues R131, R133, and R135. The residue at position 137 (S137) is a Phosphoserine. Basic and acidic residues-rich tracts occupy residues I148–V185, F194–R217, and D227–G241. Residues S149–V185 are a coiled coil. S202 is subject to Phosphoserine. 2 positions are modified to phosphoserine: S248 and S255. Basic and acidic residues-rich tracts occupy residues G258–L279, W289–F302, E311–A320, and Y361–E372. A phosphoserine mark is found at S376, S386, and S390. Over residues S386–P395 the composition is skewed to low complexity. Pro residues predominate over residues M396–H406. The segment covering D411 to P446 has biased composition (acidic residues). S521 bears the Phosphoserine mark.

Probable component of the exon junction complex (EJC); the association is RNA-dependent.

In terms of biological role, probable component of the exon junction complex (EJC), a multiprotein complex that associates immediately upstream of the exon-exon junction on mRNAs and serves as a positional landmark for the intron exon structure of genes and directs post-transcriptional processes in the cytoplasm such as mRNA export, nonsense-mediated mRNA decay (NMD) or translation. The chain is Coiled-coil domain-containing protein 9 from Homo sapiens (Human).